The following is a 473-amino-acid chain: ATP synthase subunit beta (473 aa).

153–160 (GGAGVGKT) contacts ATP.

This sequence belongs to the ATPase alpha/beta chains family. As to quaternary structure, F-type ATPases have 2 components, CF(1) - the catalytic core - and CF(0) - the membrane proton channel. CF(1) has five subunits: alpha(3), beta(3), gamma(1), delta(1), epsilon(1). CF(0) has three main subunits: a(1), b(2) and c(9-12). The alpha and beta chains form an alternating ring which encloses part of the gamma chain. CF(1) is attached to CF(0) by a central stalk formed by the gamma and epsilon chains, while a peripheral stalk is formed by the delta and b chains.

Its subcellular location is the cell inner membrane. It carries out the reaction ATP + H2O + 4 H(+)(in) = ADP + phosphate + 5 H(+)(out). Its function is as follows. Produces ATP from ADP in the presence of a proton gradient across the membrane. The catalytic sites are hosted primarily by the beta subunits. The sequence is that of ATP synthase subunit beta from Rickettsia rickettsii (strain Iowa).